The primary structure comprises 761 residues: Zinc finger protein 287 (761 aa).

Residues 49 to 131 enclose the SCAN box domain; it reads RQNFRNFPYP…TLVEDLTQIL (83 aa). The interval 134–154 is disordered; it reads EAPQNSTLSQDTPEEDPRGKH. Residues 170–238 enclose the KRAB domain; the sequence is MTFKDVAVDI…IKEILEGPSP (69 aa). 14 C2H2-type zinc fingers span residues 368 to 390, 396 to 418, 424 to 446, 452 to 474, 480 to 502, 508 to 530, 536 to 558, 564 to 586, 592 to 614, 620 to 642, 648 to 670, 676 to 698, 704 to 726, and 732 to 754; these read YKCN…QSTH, YECE…QRMH, YECH…QRIH, YKCD…QRTH, YKCL…QRVH, YICN…QKIH, YKCN…QRIH, YKCN…QTTH, YICN…HRTH, YKCS…QRIH, FKCN…QRIH, YKCN…QRTH, and YACR…QRVH.

The protein belongs to the krueppel C2H2-type zinc-finger protein family.

It localises to the nucleus. Functionally, may be involved in transcriptional regulation. The protein is Zinc finger protein 287 of Pongo pygmaeus (Bornean orangutan).